The primary structure comprises 252 residues: Transmembrane ascorbate-dependent reductase CYB561 (252 aa).

The residue at position 1 (M1) is an N-acetylmethionine. At 1–17 (MEGPASPARAPGALPYY) the chain is on the cytoplasmic side. The chain crosses the membrane as a helical span at residues 18–38 (VAFSQLLGLIVVAMTGAWLGM). The Cytochrome b561 domain occupies 20–221 (FSQLLGLIVV…FATVILYILT (202 aa)). At 39–52 (YRGGIAWESALQFN) the chain is on the vesicular side. A helical membrane pass occupies residues 53–73 (VHPLCMIIGLVFLQGDALLVY). Heme b contacts are provided by H54, R74, and K81. Residues 74 to 86 (RVFRNEAKRTTKV) are Cytoplasmic-facing. Residues K81 and K85 each coordinate L-ascorbate. A helical transmembrane segment spans residues 87–107 (LHGLLHVFAFVIALVGLVAVF). Heme b-binding positions include H88, 117 to 120 (DLYS), and H122. The Vesicular segment spans residues 108-125 (EHHRKKGYADLYSLHSWC). Residues 126–146 (GILVFALFFAQWLVGFSFFLF) traverse the membrane as a helical segment. Residues 147-159 (PGASFSLRSRYRP) lie on the Cytoplasmic side of the membrane. Residue R154 coordinates L-ascorbate. A helical transmembrane segment spans residues 160–180 (QHVFFGAAIFLLSVATALLGL). Heme b is bound by residues H161 and E182. Residues 181–199 (KEALLFELGTKYSMFEPEG) are Vesicular-facing. Residues 200 to 220 (VLANVLGLLLATFATVILYIL) form a helical membrane-spanning segment. At 221-252 (TRADWKRPLQAEEQALSMDFKTLTEGDSPSSQ) the chain is on the cytoplasmic side. K226 serves as a coordination point for heme b. A phosphoserine mark is found at S248 and S250.

Heme b is required as a cofactor. Expressed in the adrenal medulla and all brain regions, but not in visceral organs.

The protein localises to the cytoplasmic vesicle. It is found in the secretory vesicle. Its subcellular location is the chromaffin granule membrane. The catalysed reaction is monodehydro-L-ascorbate radical(out) + L-ascorbate(in) = monodehydro-L-ascorbate radical(in) + L-ascorbate(out). Its function is as follows. Transmembrane reductase that uses ascorbate as an electron donor in the cytoplasm and transfers electrons across membranes to reduce monodehydro-L-ascorbate radical in the lumen of secretory vesicles. It is therefore involved the regeneration and homeostasis within secretory vesicles of ascorbate which in turn provides reducing equivalents needed to support the activity of intravesicular enzymes. This is Transmembrane ascorbate-dependent reductase CYB561 (CYB561) from Bos taurus (Bovine).